The primary structure comprises 234 residues: Small ribosomal subunit protein uS3 (234 aa).

The KH type-2 domain occupies 39 to 107 (IRKYVKKELY…EIAVNIKEER (69 aa)). A compositionally biased stretch (basic and acidic residues) spans 213 to 222 (PTEKAEETTS). The disordered stretch occupies residues 213–234 (PTEKAEETTSKPKRRPAKKRGK). Residues 223 to 234 (KPKRRPAKKRGK) are compositionally biased toward basic residues.

The protein belongs to the universal ribosomal protein uS3 family. In terms of assembly, part of the 30S ribosomal subunit. Forms a tight complex with proteins S10 and S14.

Functionally, binds the lower part of the 30S subunit head. Binds mRNA in the 70S ribosome, positioning it for translation. This is Small ribosomal subunit protein uS3 from Aliarcobacter butzleri (strain RM4018) (Arcobacter butzleri).